The chain runs to 380 residues: Queuine tRNA-ribosyltransferase (380 aa).

The active-site Proton acceptor is the Asp93. Substrate contacts are provided by residues 93–97 (DSGGF), Asp147, Gln198, and Gly225. The interval 256–262 (GVGLPSN) is RNA binding. The active-site Nucleophile is the Asp275. The interval 280–284 (ARNGR) is RNA binding; important for wobble base 34 recognition. Zn(2+) is bound by residues Cys313, Cys315, Cys318, and His344.

It belongs to the queuine tRNA-ribosyltransferase family. As to quaternary structure, homodimer. Within each dimer, one monomer is responsible for RNA recognition and catalysis, while the other monomer binds to the replacement base PreQ1. Zn(2+) serves as cofactor.

The catalysed reaction is 7-aminomethyl-7-carbaguanine + guanosine(34) in tRNA = 7-aminomethyl-7-carbaguanosine(34) in tRNA + guanine. It participates in tRNA modification; tRNA-queuosine biosynthesis. Its function is as follows. Catalyzes the base-exchange of a guanine (G) residue with the queuine precursor 7-aminomethyl-7-deazaguanine (PreQ1) at position 34 (anticodon wobble position) in tRNAs with GU(N) anticodons (tRNA-Asp, -Asn, -His and -Tyr). Catalysis occurs through a double-displacement mechanism. The nucleophile active site attacks the C1' of nucleotide 34 to detach the guanine base from the RNA, forming a covalent enzyme-RNA intermediate. The proton acceptor active site deprotonates the incoming PreQ1, allowing a nucleophilic attack on the C1' of the ribose to form the product. After dissociation, two additional enzymatic reactions on the tRNA convert PreQ1 to queuine (Q), resulting in the hypermodified nucleoside queuosine (7-(((4,5-cis-dihydroxy-2-cyclopenten-1-yl)amino)methyl)-7-deazaguanosine). The chain is Queuine tRNA-ribosyltransferase from Clostridium perfringens (strain ATCC 13124 / DSM 756 / JCM 1290 / NCIMB 6125 / NCTC 8237 / Type A).